A 303-amino-acid chain; its full sequence is tRNA pseudouridine synthase B (303 aa).

Residue Asp53 is the Nucleophile of the active site.

It belongs to the pseudouridine synthase TruB family. Type 1 subfamily.

The catalysed reaction is uridine(55) in tRNA = pseudouridine(55) in tRNA. Its function is as follows. Responsible for synthesis of pseudouridine from uracil-55 in the psi GC loop of transfer RNAs. The chain is tRNA pseudouridine synthase B from Zymomonas mobilis subsp. mobilis (strain ATCC 31821 / ZM4 / CP4).